The chain runs to 118 residues: Ribonuclease P protein component 4 (118 aa).

Residues Cys59, Cys62, Cys85, and Cys88 each contribute to the Zn(2+) site.

This sequence belongs to the eukaryotic/archaeal RNase P protein component 4 family. Consists of a catalytic RNA component and at least 4-5 protein subunits. Requires Zn(2+) as cofactor.

It is found in the cytoplasm. The enzyme catalyses Endonucleolytic cleavage of RNA, removing 5'-extranucleotides from tRNA precursor.. Part of ribonuclease P, a protein complex that generates mature tRNA molecules by cleaving their 5'-ends. This is Ribonuclease P protein component 4 from Sulfolobus acidocaldarius (strain ATCC 33909 / DSM 639 / JCM 8929 / NBRC 15157 / NCIMB 11770).